The chain runs to 517 residues: Ribonuclease Y (517 aa).

A helical membrane pass occupies residues 4–24 (LIYIVILFVGIAAGAFFGISV). One can recognise a KH domain in the interval 207–267 (TISTVALPND…LRREVARRTI (61 aa)). In terms of domain architecture, HD spans 333 to 426 (VLAHSVEVAQ…VAAADAISAA (94 aa)).

Belongs to the RNase Y family.

The protein resides in the cell membrane. Endoribonuclease that initiates mRNA decay. This Fervidobacterium nodosum (strain ATCC 35602 / DSM 5306 / Rt17-B1) protein is Ribonuclease Y.